The chain runs to 651 residues: L-aspartate oxidase, chloroplastic (651 aa).

A chloroplast-targeting transit peptide spans 1 to 74 (MAAHVSTGNI…PISETSKPIR (74 aa)). Residues 92–95 (SGVA), K114, 121–128 (NTNYAQGG), and D292 each bind FAD. R368 functions as the Proton donor/acceptor in the catalytic mechanism. FAD-binding positions include E453 and 469–470 (SL).

This sequence belongs to the FAD-dependent oxidoreductase 2 family. NadB subfamily. As to quaternary structure, interacts in vitro with QS. FAD is required as a cofactor.

It localises to the plastid. The protein localises to the chloroplast. The enzyme catalyses L-aspartate + O2 = iminosuccinate + H2O2. It functions in the pathway cofactor biosynthesis; NAD(+) biosynthesis; iminoaspartate from L-aspartate (oxidase route): step 1/1. Functionally, catalyzes the oxidation of L-aspartate to iminoaspartate. Can complement nadB-deficient E.coli mutant. Plays a role in stomatal immunity. The sequence is that of L-aspartate oxidase, chloroplastic from Arabidopsis thaliana (Mouse-ear cress).